A 470-amino-acid polypeptide reads, in one-letter code: Ribulose bisphosphate carboxylase large chain (470 aa).

2 residues coordinate substrate: Asn115 and Thr165. The active-site Proton acceptor is Lys167. Lys169 is a substrate binding site. 3 residues coordinate Mg(2+): Lys193, Asp195, and Glu196. Residue Lys193 is modified to N6-carboxylysine. Residue His286 is the Proton acceptor of the active site. The substrate site is built by Arg287, His319, and Ser371.

Belongs to the RuBisCO large chain family. Type I subfamily. Heterohexadecamer of 8 large chains and 8 small chains. Mg(2+) serves as cofactor.

It localises to the carboxysome. The enzyme catalyses 2 (2R)-3-phosphoglycerate + 2 H(+) = D-ribulose 1,5-bisphosphate + CO2 + H2O. The catalysed reaction is D-ribulose 1,5-bisphosphate + O2 = 2-phosphoglycolate + (2R)-3-phosphoglycerate + 2 H(+). Functionally, ruBisCO catalyzes two reactions: the carboxylation of D-ribulose 1,5-bisphosphate, the primary event in carbon dioxide fixation, as well as the oxidative fragmentation of the pentose substrate in the photorespiration process. Both reactions occur simultaneously and in competition at the same active site. The polypeptide is Ribulose bisphosphate carboxylase large chain (Prochlorococcus marinus (strain MIT 9303)).